Consider the following 1077-residue polypeptide: Mitogen-activated protein kinase kinase kinase 9 (1077 aa).

Residues 1–40 (MESSRSLLGCLASATAAPPGDDATGAGAEEEEDEEEAAAE) form a disordered region. Positions 14–27 (ATAAPPGDDATGAG) are enriched in low complexity. The segment covering 28–38 (AEEEEDEEEAA) has biased composition (acidic residues). The SH3 domain maps to 45–109 (AALPYWTAVF…PSNYVTPRSA (65 aa)). The Protein kinase domain maps to 137–405 (LTLEEIIGIG…LTTIEESGFF (269 aa)). ATP-binding positions include 143–151 (IGIGGFGKV) and K164. D261 acts as the Proton acceptor in catalysis. Phosphothreonine; by autocatalysis occurs at positions 297 and 298. Residue S301 is modified to Phosphoserine; by autocatalysis. T305 bears the Phosphothreonine; by autocatalysis mark. 2 leucine-zipper regions span residues 423–444 (IQEM…EEEL) and 458–479 (LRRR…ELNI). Residues 491-503 (VKKRKGKFRKSRL) show a composition bias toward basic residues. Disordered regions lie at residues 491–511 (VKKR…GNRI), 526–606 (SPTM…TSGD), 646–713 (EDED…KRGG), 748–790 (LPPE…KKEE), 860–971 (RDPN…PRPS), and 986–1011 (SHAR…CFAS). S526 carries the post-translational modification Phosphoserine. 2 stretches are compositionally biased toward polar residues: residues 559–568 (PGESSKTWGR) and 693–709 (PVNS…TNSL). Positions 755–767 (PPAREEKKRREGL) are enriched in basic and acidic residues. Residues 863 to 880 (NQSLTPTHVTLTAPTQPS) are compositionally biased toward polar residues. A compositionally biased stretch (low complexity) spans 901–915 (GSRSPSSNGMSPSPG). A compositionally biased stretch (polar residues) spans 987–1011 (HARSASPANSSSTETPSNLDSCFAS).

The protein belongs to the protein kinase superfamily. STE Ser/Thr protein kinase family. MAP kinase kinase kinase subfamily. Homodimer. The cofactor is Mg(2+). Autophosphorylation on serine and threonine residues within the activation loop plays a role in enzyme activation. Thr-305 is likely to be the main autophosphorylation site. Autophosphorylation also occurs on Thr-297 and Ser-301. As to expression, expressed in cochlea and utricle.

The catalysed reaction is L-seryl-[protein] + ATP = O-phospho-L-seryl-[protein] + ADP + H(+). The enzyme catalyses L-threonyl-[protein] + ATP = O-phospho-L-threonyl-[protein] + ADP + H(+). Its activity is regulated as follows. Homodimerization via the leucine zipper domains is required for autophosphorylation of multiple sites in the activation loop and subsequent activation. Autophosphorylation at Thr-305 is the key step in activation of MAP3K9/MLK1 and is required for full phosphorylation. Autophosphorylation at Thr-297 and Ser-301 have been shown to be of secondary importance in the activation of MAP3K9/MLK1. Serine/threonine kinase which acts as an essential component of the MAP kinase signal transduction pathway. Plays an important role in the cascades of cellular responses evoked by changes in the environment. Once activated, acts as an upstream activator of the MKK/JNK signal transduction cascade through the phosphorylation of MAP2K4/MKK4 and MAP2K7/MKK7 which in turn activate the JNKs. The MKK/JNK signaling pathway regulates stress response via activator protein-1 (JUN) and GATA4 transcription factors. Also plays a role in mitochondrial death signaling pathway, including the release cytochrome c, leading to apoptosis. The sequence is that of Mitogen-activated protein kinase kinase kinase 9 (Map3k9) from Mus musculus (Mouse).